Reading from the N-terminus, the 371-residue chain is tRNA-specific 2-thiouridylase MnmA (371 aa).

ATP is bound by residues 13–20 (GMSGGVDS) and Met-39. An interaction with target base in tRNA region spans residues 99-101 (NPD). Residue Cys-104 is the Nucleophile of the active site. A disulfide bridge connects residues Cys-104 and Cys-200. Gly-128 contacts ATP. The tract at residues 150–152 (KDQ) is interaction with tRNA. Cys-200 (cysteine persulfide intermediate) is an active-site residue. The interaction with tRNA stretch occupies residues 308–309 (RY).

This sequence belongs to the MnmA/TRMU family.

It is found in the cytoplasm. The catalysed reaction is S-sulfanyl-L-cysteinyl-[protein] + uridine(34) in tRNA + AH2 + ATP = 2-thiouridine(34) in tRNA + L-cysteinyl-[protein] + A + AMP + diphosphate + H(+). In terms of biological role, catalyzes the 2-thiolation of uridine at the wobble position (U34) of tRNA, leading to the formation of s(2)U34. The polypeptide is tRNA-specific 2-thiouridylase MnmA (Listeria monocytogenes serotype 4a (strain HCC23)).